The chain runs to 914 residues: Trafficking kinesin-binding protein 2 (914 aa).

Residues 1 to 21 (MSQSQNAIFTSPTGEENLMNS) show a composition bias toward polar residues. The tract at residues 1 to 30 (MSQSQNAIFTSPTGEENLMNSNHRDSESIT) is disordered. Positions 48-353 (EEQLPQYRLK…QEEIKELRSR (306 aa)) constitute an HAP1 N-terminal domain. A coiled-coil region spans residues 134-354 (QALLKRNHVL…EEIKELRSRS (221 aa)). An interaction with HGS region spans residues 359–509 (HLYFSQSYGA…KQFFAEEWQR (151 aa)). At Ser420 the chain carries Phosphoserine. 2 disordered regions span residues 447-482 (QQTE…DSDL) and 765-787 (QPLP…SPCP). The span at 454–471 (LLNQGSSSEEVAGSSQKM) shows a compositional bias: polar residues. Pro residues predominate over residues 775 to 787 (STPPNSPSHSPCP).

It belongs to the milton family. Interacts with GABA-A receptor and O-GlcNAc transferase. Interacts with HGS. Interacts with RHOT1/Miro-1 and RHOT2/Miro-2. In terms of processing, O-glycosylated. In terms of tissue distribution, widely expressed, with highest expression in heart.

Its subcellular location is the cytoplasm. The protein localises to the early endosome. It is found in the mitochondrion. May regulate endosome-to-lysosome trafficking of membrane cargo, including EGFR. The sequence is that of Trafficking kinesin-binding protein 2 (TRAK2) from Homo sapiens (Human).